The sequence spans 334 residues: Protein POLAR-like 1 (334 aa).

Over residues 53-63 the composition is skewed to basic and acidic residues; sequence IRTSSEDDHHR. A disordered region spans residues 53-74; sequence IRTSSEDDHHRVGQFSDSPPPT. Residues 273–300 adopt a coiled-coil conformation; the sequence is ETRQQEEIKELEIALDDAKQRLHLKETE.

Its subcellular location is the cytoplasm. It is found in the cell cortex. Its function is as follows. Acts as a stomatal lineage scaffold which regulates subcellular localization and transient polarization of kinases (e.g. ASK7/BIN2 and ASK3/SK12) involved in asymmetric cell division (ACD) in a BASL-dependent manner. The protein is Protein POLAR-like 1 of Arabidopsis thaliana (Mouse-ear cress).